Here is a 200-residue protein sequence, read N- to C-terminus: Putative biotin transporter BioYB (200 aa).

The next 6 membrane-spanning stretches (helical) occupy residues 13–33, 36–56, 61–81, 90–110, 121–141, and 158–178; these read LIGM…VAPF, VAGI…LLLG, AIAM…FAQF, GKSG…GWFL, FLIA…TYMY, and WGFM…LSFI.

The protein belongs to the BioY family.

It is found in the cell membrane. Putative biotin transporter. The polypeptide is Putative biotin transporter BioYB (bioYB) (Bacillus subtilis (strain 168)).